The following is a 797-amino-acid chain: Cleavage factor two protein 2 (797 aa).

2 disordered regions span residues Glu519–Ser557 and Pro677–Glu703. Over residues Lys684–Glu703 the composition is skewed to basic and acidic residues.

In terms of assembly, component of the cleavage and polyadenylation factor (CPF) complex, which is composed of cft1, cft2, ysh1, pta1, swd2, pfs2, dis2, yth1, ssu72, and fip1.

It localises to the nucleus. Its function is as follows. RNA-binding component of the cleavage and polyadenylation factor (CPF) complex, which plays a key role in polyadenylation-dependent pre-mRNA 3'-end formation and cooperates with cleavage factors including the CFIA complex and NAB4/CFIB. May be involved in poly(A)-site recognition. May be involved in the association of the CPF, CPFIA and RNA polymerase II complexes. This chain is Cleavage factor two protein 2 (cft2), found in Schizosaccharomyces pombe (strain 972 / ATCC 24843) (Fission yeast).